Consider the following 153-residue polypeptide: uncharacterized protein (153 aa).

A run of 2 helical transmembrane segments spans residues 16–36 (ILACLLLIFLMATIFLLILEI) and 97–117 (ALTTTLSIILLVCIIMACIIC).

The protein resides in the membrane. This is an uncharacterized protein from Human herpesvirus 6A (strain Uganda-1102) (HHV-6 variant A).